The following is a 585-amino-acid chain: MAGUK p55 subfamily member 3 (585 aa).

L27 domains follow at residues 6 to 60 (EDSG…ERQS) and 61 to 118 (PTPV…FDPV). Positions 137 to 212 (IVRLVKNKEP…LAQSQGSITL (76 aa)) constitute a PDZ domain. In terms of domain architecture, SH3 spans 226 to 296 (ESKVFMRALF…PSKGFQERRL (71 aa)). S307 is subject to Phosphoserine. In terms of domain architecture, Guanylate kinase-like spans 385–570 (PRLVVLIGSL…AYSQLKVVLE (186 aa)).

Belongs to the MAGUK family. Interacts with HTR2C; this interaction stabilizes the receptor at the plasma membrane and prevents the desensitization of the HTR2C receptor-mediated calcium response. Interacts with HTR2A. Interacts with HTR4. Interacts (via PDZ domain) with CADM1 (via C-terminus)Interacts (via PDZ domain) with CADM1; this interaction connects CADM1 with DLG1. Interacts (via Guanylate kinase-like domain) with PALS1. Interacts with DLG1 (via N-terminus); this interaction connects CADM1 with DLG1 and links CADM1 with the regulatory subunit of phosphoinositide-3-kinase (PI3K) by forming a multiprotein complex and participates in cell spreading. Expressed in retina (at protein level) at the subapical region (SAR) adjacent to adherens junctions at the OLM, and at the OPL.

It localises to the cell membrane. It is found in the apical cell membrane. The protein localises to the cell junction. Its subcellular location is the adherens junction. In terms of biological role, participates in cell spreading through the phosphoinositide-3-kinase (PI3K) pathway by connecting CADM1 to DLG1 and the regulatory subunit of phosphoinositide-3-kinase (PI3K). Stabilizes HTR2C at the plasma membrane and prevents its desensitization. May participates in the maintenance of adherens junctions. This Homo sapiens (Human) protein is MAGUK p55 subfamily member 3.